The sequence spans 429 residues: FAD-dependent monooxygenase azaH (429 aa).

Residues 5-25 (SIEVAIIGAGITGITLALGLL) traverse the membrane as a helical segment. 2 residues coordinate FAD: Glu35 and Gly48. 2 N-linked (GlcNAc...) asparagine glycosylation sites follow: Asn75 and Asn87. Residue Arg116 coordinates FAD. Arg199 is an active-site residue. Residues Asp315 and Ala328 each contribute to the FAD site.

The protein belongs to the paxM FAD-dependent monooxygenase family. FAD serves as cofactor.

Its subcellular location is the membrane. Its pathway is secondary metabolite biosynthesis. In terms of biological role, FAD-dependent monooxygenase; part of the gene cluster that mediates the biosynthesis of azaphilones, a class of fungal metabolites characterized by a highly oxygenated pyrano-quinone bicyclic core and exhibiting a broad range of bioactivities. In the first step, the non-reducing polyketide synthase azaA forms the hexaketide precursor from successive condensations of five malonyl-CoA units, presumably with a simple acetyl-CoA starter unit. The reactive polyketide chain then undergoes a PT-mediated C2-C7 cyclization to afford the aromatic ring and is eventually released as an aldehyde through the R-domain. The putative ketoreductase azaE is proposed to catalyze the reduction of the terminal ketone resulting in the early culture product FK17-P2a. The monooxygenase azaH was demonstrated to be the only enzyme required to convert FK17-P2a to azanigerone E. AzaH first hydroxylates the benzaldehyde intermediate FK17-P2a at C4, which triggers the formation of the pyran-ring to afford azanigerone E. In parallel, the 2,4-dimethylhexanoyl chain is synthesized by the HR-PKS azaB and is proposed to be transferred to the C4-hydroxyl of azanigerone E by the acyltransferase azaD directly from the ACP domain of azaB. Alternatively, the 2,4-dimethyl-hexanoyl chain may be offloaded from the HR-PKS as a carboxylic acid and converted to an acyl-CoA by azaF. The resulting acyl-CoA molecule could then be taken up as a substrate by AzaD to form azanigerone B. To yield the carboxylic acid substituent in azanigerone A, the hydroxypropyl side chain of azanigerone B would need to undergo a C-C oxidative cleavage catalyzed by cytochrome P450 AzaI. AzaI is proposed to act on a vicinal diol that leads to a C-C bond scission either through an alkoxyradical intermediate or a peroxy complex. In the biosynthesis of azanigerone A, azanigerone B first undergoes hydroxylation at C10, possibly catalyzed by one of the two FAD-dependent monooxygenases encoded in the cluster, azaG or azaL, resulting in the vicinal diol azanigerone C. Oxidative cleavage of azanigerone C by azaI would yield the corresponding aldehyde derivative of azanigerone A. Finally, the dehydrogenase azaJ is proposed to convert the aldehyde functional group into the carboxylic acid, completing the conversion from azanigerone B to azanigerone A. Alternatively, the oxidation of aldehyde to carboxylic acid may be catalyzed by the same P450 enzyme azaI via consecutive oxidation or by endogenous alcohol dehydrogenase. This chain is FAD-dependent monooxygenase azaH, found in Aspergillus niger (strain ATCC 1015 / CBS 113.46 / FGSC A1144 / LSHB Ac4 / NCTC 3858a / NRRL 328 / USDA 3528.7).